A 474-amino-acid chain; its full sequence is Membrane-bound acylglycerophosphatidylinositol O-acyltransferase mboat7 (474 aa).

At 1-5 the chain is on the cytoplasmic side; it reads MSPNE. The helical transmembrane segment at 6–22 threads the bilayer; that stretch reads LTYLAILLGSAPLGFLF. Residues 23-33 lie on the Lumenal side of the membrane; that stretch reads KNGSPQVKQRG. A helical transmembrane segment spans residues 34–57; it reads SAAVGVALTLITCHIHSLHSAITI. The Cytoplasmic portion of the chain corresponds to 58-73; sequence LGTWLIIKILPRSCHF. Residues 74 to 93 traverse the membrane as a helical segment; sequence PTLGWTFTYLLFFRTITYFD. The Lumenal segment spans residues 94–193; the sequence is IPAPTPFTNA…IPSWKPLVSR (100 aa). A helical membrane pass occupies residues 194 to 211; sequence LKPAPVFGVLFLIASQYF. Residues 212–230 lie on the Cytoplasmic side of the membrane; sequence PLDYVKTDEFYEQAFLYRL. A helical transmembrane segment spans residues 231–260; it reads FYMVPTFFIFRMRFYVAWIFAECGCISAAF. At 261 to 427 the chain is on the lumenal side; that stretch reads GAYPVSAKSR…LTFTDTYRYW (167 aa). N-linked (GlcNAc...) asparagine glycosylation occurs at asparagine 322. Residues 428-448 traverse the membrane as a helical segment; sequence QSIYFSVHVLAISLFLLGRVL. The Cytoplasmic segment spans residues 449 to 473; that stretch reads ALKSPRRPRNTKEEKAEAKQENRLQ.

The protein belongs to the membrane-bound acyltransferase family.

The protein localises to the endoplasmic reticulum membrane. It carries out the reaction a 1-acyl-sn-glycero-3-phospho-(1D-myo-inositol) + (5Z,8Z,11Z,14Z)-eicosatetraenoyl-CoA = a 1-acyl-2-(5Z,8Z,11Z,14Z-eicosatetraenoyl)-sn-glycero-3-phospho-(1D-myo-inositol) + CoA. The catalysed reaction is (5Z,8Z,11Z,14Z)-eicosatetraenoyl-CoA + 1-hexadecanoyl-sn-glycero-3-phosphocholine = 1-hexadecanoyl-2-(5Z,8Z,11Z,14Z-eicosatetraenoyl)-sn-glycero-3-phosphocholine + CoA. The enzyme catalyses a 1-acyl-sn-glycero-3-phospho-(1D-myo-inositol) + an acyl-CoA = a 1,2-diacyl-sn-glycero-3-phospho-(1D-myo-inositol) + CoA. It catalyses the reaction 1-octadecanoyl-sn-glycero-3-phospho-(1D-myo-inositol) + (5Z,8Z,11Z,14Z)-eicosatetraenoyl-CoA = 1-octadecanoyl-2-(5Z,8Z,11Z,14Z-eicosatetraenoyl)-sn-glycero-3-phospho-(1D-myo-inositol) + CoA. It participates in lipid metabolism; phospholipid metabolism. Its function is as follows. Acyltransferase which catalyzes the transfer of an acyl group from an acyl-CoA to a lysophosphatidylinositol (1-acylglycerophosphatidylinositol or LPI) leading to the production of a phosphatidylinositol (1,2-diacyl-sn-glycero-3-phosphoinositol or PI) and participates in the reacylation step of the phospholipid remodeling pathway also known as the Lands cycle. Prefers arachidonoyl-CoA as the acyl donor, thus contributing to the regulation of free levels arachidonic acid in cell. The protein is Membrane-bound acylglycerophosphatidylinositol O-acyltransferase mboat7 (mboat7) of Xenopus laevis (African clawed frog).